The sequence spans 443 residues: Magnesium transporter MRS2-10 (443 aa).

The interval 1–33 (MSELKERLLPPRPASAINLRGDAGSRPSPSGRQ) is disordered. Helical transmembrane passes span 379–399 (LLLT…GIFG) and 415–435 (WVLA…LWYY). The Required for magnesium transport activity motif lies at 399 to 401 (GMN).

The protein belongs to the CorA metal ion transporter (MIT) (TC 1.A.35.5) family. As to expression, expressed in the whole plant.

The protein resides in the cell membrane. High-affinity magnesium transporter that mediates the influx of magnesium. Involved in tolerance to Aluminum. This Arabidopsis thaliana (Mouse-ear cress) protein is Magnesium transporter MRS2-10 (MRS2-10).